Consider the following 78-residue polypeptide: Neurotoxin 3FTx-LK (78 aa).

The signal sequence occupies residues 1-21 (MKTLLLTLVVVTIVCLDLGYT). Cystine bridges form between Cys24–Cys42, Cys35–Cys60, Cys64–Cys70, and Cys71–Cys76.

In terms of tissue distribution, expressed by the venom gland.

The protein resides in the secreted. Functionally, blocks both the muscle-twitch response to nerve stimulation and the response to exogenous acetylcholine. The chain is Neurotoxin 3FTx-LK from Bungarus fasciatus (Banded krait).